Here is a 226-residue protein sequence, read N- to C-terminus: Ribonuclease 3 (226 aa).

An RNase III domain is found at 6–128; it reads INRLQRKLGY…LIGGVFLDSD (123 aa). Residue Glu41 participates in Mg(2+) binding. Asp45 is an active-site residue. Mg(2+)-binding residues include Asp114 and Glu117. Glu117 is an active-site residue. Residues 155–225 form the DRBM domain; sequence DPKTRLQEYL…AEQALKMLEL (71 aa).

The protein belongs to the ribonuclease III family. As to quaternary structure, homodimer. Mg(2+) is required as a cofactor.

The protein resides in the cytoplasm. The catalysed reaction is Endonucleolytic cleavage to 5'-phosphomonoester.. Functionally, digests double-stranded RNA. Involved in the processing of primary rRNA transcript to yield the immediate precursors to the large and small rRNAs (23S and 16S). Processes some mRNAs, and tRNAs when they are encoded in the rRNA operon. Processes pre-crRNA and tracrRNA of type II CRISPR loci if present in the organism. This chain is Ribonuclease 3, found in Enterobacter sp. (strain 638).